A 76-amino-acid chain; its full sequence is Senegalin (76 aa).

Residues 1 to 22 form the signal peptide; the sequence is MLSLKKSMLLLFFLGMVSFSLA. The propeptide occupies 23–55; it reads NKRSDGKRADEEGEDKRADEEGEDKRADEEGED. A disordered region spans residues 24–54; the sequence is KRSDGKRADEEGEDKRADEEGEDKRADEEGE. Position 75 is a leucine amide (leucine 75).

As to expression, expressed by the skin glands.

It is found in the secreted. Antimicrobial peptide with activity against the Gram-positive bacterium S.aureus NCTC 10788 (MIC=50 um) and the yeast C.albicans NCPF 1467 (MIC=150 uM). Ineffective against the Gram-negative bacterium E.coli NCTC 10418. Induces a dose-dependent contraction of rat urinary bladder smooth muscle (EC50=2.9 nM) and a dose-dependent relaxation of rat tail artery smooth muscle (EC50=37.7 nM). The protein is Senegalin of Kassina senegalensis (Senegal running frog).